The chain runs to 250 residues: Manganese transport system ATP-binding protein MntB (250 aa).

The region spanning 5-236 is the ABC transporter domain; the sequence is VKVDNLSVFY…MVAKTYQGNL (232 aa). 37-44 serves as a coordination point for ATP; the sequence is GPNGAGKS.

Belongs to the ABC transporter superfamily.

It localises to the cell membrane. In terms of biological role, this protein is probably a component of a manganese permease, a binding protein-dependent, ATP-driven transport system. Probably responsible for energy coupling to the transport system. The protein is Manganese transport system ATP-binding protein MntB (mntB) of Halalkalibacterium halodurans (strain ATCC BAA-125 / DSM 18197 / FERM 7344 / JCM 9153 / C-125) (Bacillus halodurans).